A 370-amino-acid chain; its full sequence is 4-hydroxy-3-methylbut-2-en-1-yl diphosphate synthase (flavodoxin) (370 aa).

[4Fe-4S] cluster contacts are provided by Cys-270, Cys-273, Cys-305, and Glu-312.

The protein belongs to the IspG family. The cofactor is [4Fe-4S] cluster.

It catalyses the reaction (2E)-4-hydroxy-3-methylbut-2-enyl diphosphate + oxidized [flavodoxin] + H2O + 2 H(+) = 2-C-methyl-D-erythritol 2,4-cyclic diphosphate + reduced [flavodoxin]. The protein operates within isoprenoid biosynthesis; isopentenyl diphosphate biosynthesis via DXP pathway; isopentenyl diphosphate from 1-deoxy-D-xylulose 5-phosphate: step 5/6. Converts 2C-methyl-D-erythritol 2,4-cyclodiphosphate (ME-2,4cPP) into 1-hydroxy-2-methyl-2-(E)-butenyl 4-diphosphate. The polypeptide is 4-hydroxy-3-methylbut-2-en-1-yl diphosphate synthase (flavodoxin) (Saccharophagus degradans (strain 2-40 / ATCC 43961 / DSM 17024)).